We begin with the raw amino-acid sequence, 343 residues long: Galactoside alpha-(1,2)-fucosyltransferase 2 (343 aa).

The Cytoplasmic segment spans residues 1–14; the sequence is MLVVQMPFSFPMAH. A helical; Signal-anchor for type II membrane protein membrane pass occupies residues 15 to 28; the sequence is FILFVFTVSTIFHV. The Lumenal portion of the chain corresponds to 29-343; that stretch reads QQRLAKIQAM…AADLSPLLKH (315 aa). N-linked (GlcNAc...) asparagine glycans are attached at residues N188, N282, and N308.

The protein belongs to the glycosyltransferase 11 family.

The protein resides in the golgi apparatus. Its subcellular location is the golgi stack membrane. The catalysed reaction is a beta-D-galactosyl-(1-&gt;3)-N-acetyl-beta-D-glucosaminyl derivative + GDP-beta-L-fucose = an alpha-L-Fuc-(1-&gt;2)-beta-D-Gal-(1-&gt;3)-beta-D-GlcNAc derivative + GDP + H(+). The enzyme catalyses a beta-D-galactosyl-(1-&gt;4)-N-acetyl-beta-D-glucosaminyl derivative + GDP-beta-L-fucose = an alpha-L-Fuc-(1-&gt;2)-beta-D-Gal-(1-&gt;4)-beta-D-GlcNAc derivative + GDP + H(+). It carries out the reaction a neolactoside nLc4Cer + GDP-beta-L-fucose = a neolactoside IV(2)-alpha-Fuc-nLc4Cer + GDP + H(+). It catalyses the reaction a neolactoside nLc4Cer(d18:1(4E)) + GDP-beta-L-fucose = a neolactoside IV(2)-alpha-Fuc-nLc4Cer(d18:1(4E)) + GDP + H(+). The catalysed reaction is a ganglioside GM1 + GDP-beta-L-fucose = a ganglioside Fuc-GM1 + GDP + H(+). The enzyme catalyses a ganglioside GA1 + GDP-beta-L-fucose = a ganglioside Fuc-GA1 + GDP + H(+). It carries out the reaction Lc4Cer + GDP-beta-L-fucose = alpha-L-fucosyl-(1-&gt;2)-beta-D-galactosyl-(1-&gt;3)-N-acetyl-beta-D-glucosaminyl-(1-&gt;3)-beta-D-galactosyl-(1-&gt;4)-beta-D-glucosyl-(1&lt;-&gt;1')-ceramide + GDP + H(+). It catalyses the reaction a beta-D-Gal-(1-&gt;3)-beta-D-GlcNAc-(1-&gt;3)-beta-D-Gal-(1-&gt;4)-beta-D-Glc-(1&lt;-&gt;1')-Cer(d18:1(4E)) + GDP-beta-L-fucose = alpha-L-fucosyl-(1-&gt;2)- beta-D-galactosyl-(1-&gt;3)-N-acetyl-beta-D-glucosaminyl-(1-&gt;3)-beta-D-galactosyl-(1-&gt;4)-beta-D-glucosyl-(1&lt;-&gt;1')-N-acylsphing-4-enine + GDP + H(+). The catalysed reaction is a ganglioside GD1b + GDP-beta-L-fucose = a ganglioside Fuc-GD1b + GDP + H(+). The enzyme catalyses a ganglioside GM1 (d18:1(4E)) + GDP-beta-L-fucose = a ganglioside Fuc-GM1 (d18:1(4E)) + GDP + H(+). It carries out the reaction a globoside GalGb4Cer (d18:1(4E)) + GDP-beta-L-fucose = a globoside Globo-H (d18:1(4E)) + GDP + H(+). It catalyses the reaction a lactoside III(4)-a-Fuc-Lc4Cer + GDP-beta-L-fucose = a lactoside IV(2),III(4)-a-[Fuc]2-Lc4Cer + GDP + H(+). The catalysed reaction is beta-D-galactosyl-(1-&gt;3)-N-acetyl-D-galactosamine + GDP-beta-L-fucose = alpha-L-fucosyl-(1-&gt;2)-beta-D-galactosyl-(1-&gt;3)-N-acetyl-D-galactosamine + GDP + H(+). The protein operates within protein modification; protein glycosylation. Its function is as follows. Catalyzes the transfer of L-fucose, from a guanosine diphosphate-beta-L-fucose, to the terminal galactose on both O- and N-linked glycans chains of cell surface glycoproteins and glycolipids and the resulting epitope regulates several processes such as cell-cell interaction including host-microbe interaction, cell surface expression and cell proliferation. Preferentially fucosylates gangliosides GA1 and GM1 in the antrum, cecum and colon and in the female reproductive organs. Fucosylated host glycoproteins or glycolipids mediate interaction with intestinal microbiota influencing its composition. Creates a soluble precursor oligosaccharide FuC-alpha ((1,2)Galbeta-) called the H antigen which is an essential substrate for the final step in the soluble ABO blood group antigen synthesis pathway. The polypeptide is Galactoside alpha-(1,2)-fucosyltransferase 2 (Gorilla gorilla gorilla (Western lowland gorilla)).